We begin with the raw amino-acid sequence, 318 residues long: Porphobilinogen deaminase (318 aa).

The residue at position 241 (Cys241) is an S-(dipyrrolylmethanemethyl)cysteine.

The protein belongs to the HMBS family. As to quaternary structure, monomer. Dipyrromethane serves as cofactor.

It carries out the reaction 4 porphobilinogen + H2O = hydroxymethylbilane + 4 NH4(+). It functions in the pathway porphyrin-containing compound metabolism; protoporphyrin-IX biosynthesis; coproporphyrinogen-III from 5-aminolevulinate: step 2/4. Tetrapolymerization of the monopyrrole PBG into the hydroxymethylbilane pre-uroporphyrinogen in several discrete steps. In Geobacter metallireducens (strain ATCC 53774 / DSM 7210 / GS-15), this protein is Porphobilinogen deaminase.